Reading from the N-terminus, the 800-residue chain is Phenylalanine--tRNA ligase beta subunit (800 aa).

The tRNA-binding domain maps to 39-154 (TKDIKNLVVG…ESQVPGTDAL (116 aa)). A B5 domain is found at 408 to 483 (AFITPIDITA…RIYGYDDIPS (76 aa)). The Mg(2+) site is built by D461, D467, E470, and E471. Positions 708-800 (PIFPGMSRDI…ALIEQGAVIR (93 aa)) constitute an FDX-ACB domain.

This sequence belongs to the phenylalanyl-tRNA synthetase beta subunit family. Type 1 subfamily. In terms of assembly, tetramer of two alpha and two beta subunits. It depends on Mg(2+) as a cofactor.

The protein localises to the cytoplasm. The catalysed reaction is tRNA(Phe) + L-phenylalanine + ATP = L-phenylalanyl-tRNA(Phe) + AMP + diphosphate + H(+). This Staphylococcus aureus (strain bovine RF122 / ET3-1) protein is Phenylalanine--tRNA ligase beta subunit.